A 124-amino-acid polypeptide reads, in one-letter code: Small ribosomal subunit protein uS12cz/uS12cy (124 aa).

It belongs to the universal ribosomal protein uS12 family. As to quaternary structure, part of the 30S ribosomal subunit.

It is found in the plastid. With S4 and S5 plays an important role in translational accuracy. Located at the interface of the 30S and 50S subunits. The protein is Small ribosomal subunit protein uS12cz/uS12cy (rps12-A) of Epifagus virginiana (Beechdrops).